The primary structure comprises 357 residues: tRNA N6-adenosine threonylcarbamoyltransferase (357 aa).

Positions 119 and 123 each coordinate Fe cation. Substrate is bound by residues 141 to 145 (LISGG), Asp174, Gly187, and Asn284. Asp312 provides a ligand contact to Fe cation.

The protein belongs to the KAE1 / TsaD family. The cofactor is Fe(2+).

The protein resides in the cytoplasm. It carries out the reaction L-threonylcarbamoyladenylate + adenosine(37) in tRNA = N(6)-L-threonylcarbamoyladenosine(37) in tRNA + AMP + H(+). Its function is as follows. Required for the formation of a threonylcarbamoyl group on adenosine at position 37 (t(6)A37) in tRNAs that read codons beginning with adenine. Is involved in the transfer of the threonylcarbamoyl moiety of threonylcarbamoyl-AMP (TC-AMP) to the N6 group of A37, together with TsaE and TsaB. TsaD likely plays a direct catalytic role in this reaction. This Pelagibacter ubique (strain HTCC1062) protein is tRNA N6-adenosine threonylcarbamoyltransferase.